The chain runs to 382 residues: Histidinol-phosphate aminotransferase (382 aa).

The interval 1–24 (MTSAPRPRPTLDDLPLREDLRGKS) is disordered. The span at 9–22 (PTLDDLPLREDLRG) shows a compositional bias: basic and acidic residues. Lys-233 bears the N6-(pyridoxal phosphate)lysine mark.

It belongs to the class-II pyridoxal-phosphate-dependent aminotransferase family. Histidinol-phosphate aminotransferase subfamily. Homodimer. Pyridoxal 5'-phosphate is required as a cofactor.

It carries out the reaction L-histidinol phosphate + 2-oxoglutarate = 3-(imidazol-4-yl)-2-oxopropyl phosphate + L-glutamate. It functions in the pathway amino-acid biosynthesis; L-histidine biosynthesis; L-histidine from 5-phospho-alpha-D-ribose 1-diphosphate: step 7/9. The polypeptide is Histidinol-phosphate aminotransferase (Mycobacterium ulcerans (strain Agy99)).